A 525-amino-acid chain; its full sequence is Lysine--tRNA ligase (525 aa).

The Mg(2+) site is built by Glu-419 and Glu-426.

It belongs to the class-II aminoacyl-tRNA synthetase family. Homodimer. Requires Mg(2+) as cofactor.

Its subcellular location is the cytoplasm. The enzyme catalyses tRNA(Lys) + L-lysine + ATP = L-lysyl-tRNA(Lys) + AMP + diphosphate. The protein is Lysine--tRNA ligase (lysS) of Deinococcus radiodurans (strain ATCC 13939 / DSM 20539 / JCM 16871 / CCUG 27074 / LMG 4051 / NBRC 15346 / NCIMB 9279 / VKM B-1422 / R1).